Reading from the N-terminus, the 400-residue chain is MIIEPVVKGVVARSAHPFGCQQAVRNQINYVRTADPVTDGPKKVLVLGASSGFGLASRISLAFGGSKADTIGISFERGPSEKGVGTAGWYNNIFFREEAENAGLIGKNFIGDAFTPQMRQQVIDYIKTEFGGQLDLVVYSLATGVRPNPETGELWRSSIKTMGEPVTGPTINIETDTMEQMTIGTATPAEIEDTEKVMGGEDWASWIDTLSEAGVLATGCKTVAYSYVGPKATYSIYHQGTLGRAKAHLHATADQLNDKMSEMGGEAYVSVCKALVTKASVFIPAFSPYILALFKVMKDKGVHEGCIEQMQRLYSQRLYGKNKIVPVDDSRLIRVDDWELEEDIQQQVSELMVKITPENFTTMGDYQGYKADFMQLNGFGLEGVDYQADIDFETLTQLVA.

NAD(+) contacts are provided by residues 48–53 (GASSGF), 75–76 (FE), 112–113 (DA), and 141–142 (LA). Y227 is a binding site for substrate. Y237 functions as the Proton donor in the catalytic mechanism. NAD(+) is bound by residues K246 and 275-277 (LVT).

The protein belongs to the TER reductase family. Monomer.

It catalyses the reaction a 2,3-saturated acyl-[ACP] + NAD(+) = a (2E)-enoyl-[ACP] + NADH + H(+). Its pathway is lipid metabolism; fatty acid biosynthesis. In terms of biological role, involved in the final reduction of the elongation cycle of fatty acid synthesis (FAS II). Catalyzes the reduction of a carbon-carbon double bond in an enoyl moiety that is covalently linked to an acyl carrier protein (ACP). The chain is Enoyl-[acyl-carrier-protein] reductase [NADH] 2 from Photobacterium profundum (strain SS9).